The following is a 1292-amino-acid chain: MSSECDGGSKAVMNGLAPGSNGQDKATADPLRARSISAVKIIPVKTVKNASGLVLPTDMDLTKICTGKGAVTLRASSSYRETPSSSPASPQETRQHESKPGLEPEPSSADEWRLSSSADANGNAQPSSLAAKGYRSVHPNLPSDKSQDATSSSAAQPEVIVVPLYLVNTDRGQEGTARPPTPLGPLGCVPTIPATASAASPLTFPTLDDFIPPHLQRWPHHSQPARASGSFAPISQTPPSFSPPPPLVPPAPEDLRRVSEPDLTGAVSSTDSSPLLNEVSSSLIGTDSQAFPSVSKPSSAYPSTTIVNPTIVLLQHNREQQKRLSSLSDPVSERRVGEQDSAPTQEKPTSPGKAIEKRAKDDSRRVVKSTQDLSDVSMDEVGIPLRNTERSKDWYKTMFKQIHKLNRDTPEENPYFPTYKFPELPEIQQTSEEDNPYTPTYQFPASTPSPKSEDDDSDLYSPRYSFSEDTKSPLSVPRSKSEMSYIDGEKVVKRSATLPLPARSSSLKSSSERNDWEPPDKKVDTRKYRAEPKSIYEYQPGKSSVLTNEKMSRDISPEEIDLKNEPWYKFFSELEFGKPPPKKIWDYTPGDCSILPREDRKTNLDKDLSLCQTELEADLEKMETLNKAPSANVPQSSAISPTPEISSETPGYIYSSNFHAVKRESDGAPGDLTSLENERQIYKSVLEGGDIPLQGLSGLKRPSSSASTKDSESPRHFIPADYLESTEEFIRRRHDDKEKLLADQRRLKREQEEADIAARRHTGVIPTHHQFITNERFGDLLNIDDTAKRKSGSEMRPARAKFDFKAQTLKELPLQKGDIVYIYKQIDQNWYEGEHHGRVGIFPRTYIELLPPAEKAQPKKLTPVQVLEYGEAIAKFNFNGDTQVEMSFRKGERITLLRQVDENWYEGRIPGTSRQGIFPITYVDVIKRPLVKNPVDYMDLPFSSSPSRSATASPQFSSHSKLITPAPSSLPHSRRALSPEMHAVTSEWISLTVGVPGRRSLALTPPLPPLPEASIYNTDHLALSPRASPSLSLSLPHLSWSDRPTPRSVASPLALPSPHKTYSLAPTSQASLHMNGDGGVHTPSSGIHQDSFLQLPLGSSDSVISQLSDAFSSQSKRQPWREESGQYERKAERGAGERGPGGPKISKKSCLKPSDVVRCLSTEQRLSDLNTPEESRPGKPLGSAFPGSEAEQTERHRGGEQAGRKAARRGGSQQPQAQQRRVTPDRSQTSQDLFSYQALYSYIPQNDDELELRDGDIVDVMEKCDDGWFVGTSRRTKQFGTFPGNYVKPLYL.

Disordered stretches follow at residues 1-29, 73-158, 214-275, and 318-381; these read MSSE…ATAD, LRAS…AQPE, HLQR…SSPL, and REQQ…MDEV. Over residues 74–89 the composition is skewed to low complexity; it reads RASSSYRETPSSSPAS. At Thr-82 the chain carries Phosphothreonine. Phosphoserine is present on residues Ser-86 and Ser-89. A compositionally biased stretch (basic and acidic residues) spans 93–102; sequence TRQHESKPGL. Phosphoserine is present on residues Glu-105, Leu-114, Val-137, Ser-146, Ser-242, and Ser-259. The segment covering 114 to 128 has biased composition (polar residues); sequence LSSSADANGNAQPSS. Positions 240–252 are enriched in pro residues; sequence SFSPPPPLVPPAP. A compositionally biased stretch (polar residues) spans 266-275; sequence AVSSTDSSPL. At Ser-341 the chain carries Phosphoserine. Thr-344 carries the phosphothreonine modification. Residues Glu-346 and Ser-350 each carry the phosphoserine modification. Over residues 354–365 the composition is skewed to basic and acidic residues; the sequence is AIEKRAKDDSRR. A SoHo domain is found at 366-469; that stretch reads VVKSTQDLSD…YSPRYSFSED (104 aa). Residues Ser-369, Ser-374, and Asn-387 each carry the phosphoserine modification. The interval 405–534 is disordered; it reads LNRDTPEENP…TRKYRAEPKS (130 aa). A compositionally biased stretch (polar residues) spans 437 to 450; sequence YTPTYQFPASTPSP. Phosphoserine is present on residues Ser-452, Ser-465, Asp-469, Ser-472, Arg-478, and Ser-481. The segment covering 510-534 has biased composition (basic and acidic residues); sequence SSERNDWEPPDKKVDTRKYRAEPKS. Tyr-536 is modified (phosphotyrosine; by ABL1). Ser-556, Asn-603, Ser-609, and Ser-640 each carry phosphoserine. The interval 628–650 is disordered; that stretch reads APSANVPQSSAISPTPEISSETP. Tyr-654 is subject to Phosphotyrosine; by ABL1. Phosphoserine occurs at positions 665 and 700. The interval 692–716 is disordered; sequence PLQGLSGLKRPSSSASTKDSESPRH. Thr-708 is modified (phosphothreonine). Residues Ser-713, Ile-730, Asp-735, and Ile-765 each carry the phosphoserine modification. The SH3 1 domain maps to 793–852; it reads SEMRPARAKFDFKAQTLKELPLQKGDIVYIYKQIDQNWYEGEHHGRVGIFPRTYIELLPP. The residue at position 862 (Thr-862) is a Phosphothreonine. An SH3 2 domain is found at 867–928; that stretch reads LEYGEAIAKF…PITYVDVIKR (62 aa). Val-923 is subject to Phosphoserine. At Tyr-937 the chain carries Phosphotyrosine. Low complexity predominate over residues 944–954; the sequence is SSPSRSATASP. Disordered stretches follow at residues 944–976, 1041–1064, 1106–1150, and 1162–1230; these read SSPS…SRRA, SDRP…TYSL, QLSD…KKSC, and TEQR…SQTS. Phosphoserine is present on residues Ser-945 and Ser-953. A compositionally biased stretch (polar residues) spans 955 to 971; that stretch reads QFSSHSKLITPAPSSLP. Residues 1106–1117 are compositionally biased toward polar residues; it reads QLSDAFSSQSKR. Residues 1119 to 1136 are compositionally biased toward basic and acidic residues; the sequence is PWREESGQYERKAERGAG. The span at 1162 to 1172 shows a compositional bias: polar residues; the sequence is TEQRLSDLNTP. The segment covering 1192-1203 has biased composition (basic and acidic residues); the sequence is QTERHRGGEQAG. Polar residues predominate over residues 1211–1230; it reads GSQQPQAQQRRVTPDRSQTS. Gln-1213 is subject to Phosphoserine. In terms of domain architecture, SH3 3 spans 1231 to 1292; that stretch reads QDLFSYQALY…PGNYVKPLYL (62 aa). At Tyr-1240 the chain carries Phosphotyrosine; by ABL1.

In terms of assembly, interacts (via third SH3 domain) with the Ten-1 ICD form of TENM1; the interaction induces the translocation of SORBS1 to the nucleus. Interacts with INSM1. Interacts with the long isoform of AFDN and with VCL. AFDN and VCL bind to SORBS1 in a competitive manner and do not form a ternary complex. Interacts with ABL1, CBL, CBLB and INPPL1/SHIP2 through the third SH3 domain. Interaction with ABL1 occurs only after insulin stimulation while this has no effect on the interaction with INPPL1. Interacts with the insulin receptor but dissociates from it following insulin stimulation. Also interacts with SCA7, PTK2/FAK1 and flotillin. Interacts (via SH3 domain 2) with PXN. Post-translationally, O-glycosylated. In terms of tissue distribution, detected in skeletal muscle (at protein level). Widely expressed with highest levels in heart and skeletal muscle.

The protein resides in the cell junction. It localises to the adherens junction. The protein localises to the cell membrane. Its subcellular location is the cytoplasm. It is found in the cytoskeleton. The protein resides in the focal adhesion. It localises to the nucleus. The protein localises to the nucleus matrix. Functionally, plays a role in tyrosine phosphorylation of CBL by linking CBL to the insulin receptor. Required for insulin-stimulated glucose transport. Involved in formation of actin stress fibers and focal adhesions. The protein is Sorbin and SH3 domain-containing protein 1 of Homo sapiens (Human).